The chain runs to 270 residues: Cyclic AMP-dependent transcription factor ATF-1 (270 aa).

Positions 1-91 (MEDSHKSNTS…DGENPGVSAV (91 aa)) are disordered. A compositionally biased stretch (polar residues) spans 9 to 21 (TSETAPQSGSTVQ). Residues 31–90 (QVSSLSESEESQDSSDSIGSSQKTHGILARRPSYRKILKDLSSEDIRGRKGDGENPGVSA) form the KID domain. S63 is modified (phosphoserine; by CaMK1, CDK3, RPS6KA4 and RPS6KA5). Positions 67–83 (ILKDLSSEDIRGRKGDG) are enriched in basic and acidic residues. Position 197 is a phosphoserine; by HIPK2 (S197). Residues K207 and K214 each participate in a glycyl lysine isopeptide (Lys-Gly) (interchain with G-Cter in SUMO2) cross-link. The region spanning 212–270 (QLKREIRLMKNREAARECRRKKKEYVKCLENRVAVLENQNKTLIEELKTLKDLYSNKSV) is the bZIP domain. The tract at residues 214-238 (KREIRLMKNREAARECRRKKKEYVK) is basic motif. A leucine-zipper region spans residues 240-261 (LENRVAVLENQNKTLIEELKTL).

Belongs to the bZIP family. ATF subfamily. In terms of assembly, binds DNA as a dimer. Interacts with HIPK2 and CDK3. Interacts with MOTS-c, a peptide produced by the mitochondrially encoded 12S rRNA MT-RNR1; the interaction occurs in the nucleus following metabolic stress. In terms of processing, phosphorylated at Ser-197 by HIPK2 in response to genotoxic stress. This phosphorylation promotes transcription repression of FTH1 and other antioxidant detoxification genes. The CDK3-mediated phosphorylation at Ser-63 promotes its transactivation and transcriptional activities. Phosphorylated at Ser-63 by RPS6KA4 and RPS6KA5 in response to mitogenic or stress stimuli.

Its subcellular location is the nucleus. Its function is as follows. This protein binds the cAMP response element (CRE) (consensus: 5'-GTGACGT[AC][AG]-3'), a sequence present in many viral and cellular promoters. Mediates PKA-induced stimulation of CRE-reporter genes. Represses the expression of FTH1 and other antioxidant detoxification genes. Triggers cell proliferation and transformation. In Bos taurus (Bovine), this protein is Cyclic AMP-dependent transcription factor ATF-1 (ATF1).